The primary structure comprises 459 residues: Putative BTB/POZ domain-containing protein R541 (459 aa).

In terms of domain architecture, BTB spans 76–143; it reads NHITINVGGK…NQKSTNIELY (68 aa).

This sequence belongs to the mimivirus BTB/WD family.

The sequence is that of Putative BTB/POZ domain-containing protein R541 from Acanthamoeba polyphaga mimivirus (APMV).